A 349-amino-acid chain; its full sequence is Phenylalanine--tRNA ligase alpha subunit (349 aa).

E258 lines the Mg(2+) pocket.

It belongs to the class-II aminoacyl-tRNA synthetase family. Phe-tRNA synthetase alpha subunit type 1 subfamily. In terms of assembly, tetramer of two alpha and two beta subunits. Mg(2+) serves as cofactor.

Its subcellular location is the cytoplasm. It catalyses the reaction tRNA(Phe) + L-phenylalanine + ATP = L-phenylalanyl-tRNA(Phe) + AMP + diphosphate + H(+). In Rickettsia akari (strain Hartford), this protein is Phenylalanine--tRNA ligase alpha subunit.